Reading from the N-terminus, the 587-residue chain is Mitogen-activated protein kinase 4 (587 aa).

A Protein kinase domain is found at 20 to 312; that stretch reads FVDFQPLGFG…AEMGLQHPYM (293 aa). ATP is bound by residues 26-34 and Lys49; that span reads LGFGVNGLV. The Proton acceptor role is filled by Asp149. A Phosphoserine; by PAK1, PAK2 and PAK3 modification is found at Ser186. The short motif at 186-188 is the SEG motif element; the sequence is SEG. The FRIEDE motif motif lies at 328-333; that stretch reads FRIEDE. Composition is skewed to basic and acidic residues over residues 373–383 and 395–413; these read QDASEVQRDPR and VDPR…EQSH. The disordered stretch occupies residues 373–413; the sequence is QDASEVQRDPRAGSAPLAEDVQVDPRKDSHSSSERFLEQSH. At Ser434 the chain carries Phosphoserine. A disordered region spans residues 499 to 534; it reads STQGGPEHASPPADDPERRLSASPPGRPAPVDGGAS.

This sequence belongs to the protein kinase superfamily. CMGC Ser/Thr protein kinase family. MAP kinase subfamily. Homodimer. Heterodimer with ERK3/MAPK6. Interacts with (via FRIEDE motif) MAPKAPK5. Mg(2+) serves as cofactor. Post-translationally, phosphorylated at Ser-186 by PAK1, PAK2 and PAK3 resulting in catalytic activation. Phosphorylated by MAPKAPK5 at other sites. High expression in heart and brain.

It localises to the cytoplasm. Its subcellular location is the nucleus. The enzyme catalyses L-seryl-[protein] + ATP = O-phospho-L-seryl-[protein] + ADP + H(+). The catalysed reaction is L-threonyl-[protein] + ATP = O-phospho-L-threonyl-[protein] + ADP + H(+). Its activity is regulated as follows. Activated by phosphorylation at Ser-186. Its function is as follows. Atypical MAPK protein. Phosphorylates microtubule-associated protein 2 (MAP2) and MAPKAPK5. The precise role of the complex formed with MAPKAPK5 is still unclear, but the complex follows a complex set of phosphorylation events: upon interaction with atypical MAPKAPK5, ERK4/MAPK4 is phosphorylated at Ser-186 and then mediates phosphorylation and activation of MAPKAPK5, which in turn phosphorylates ERK4/MAPK4. May promote entry in the cell cycle. This is Mitogen-activated protein kinase 4 (MAPK4) from Homo sapiens (Human).